Reading from the N-terminus, the 254-residue chain is Type III pantothenate kinase (254 aa).

Position 7–14 (aspartate 7–lysine 14) interacts with ATP. Residues tyrosine 97 and glycine 104–arginine 107 each bind substrate. Aspartate 106 acts as the Proton acceptor in catalysis. Threonine 134 lines the ATP pocket. A substrate-binding site is contributed by threonine 184.

Belongs to the type III pantothenate kinase family. In terms of assembly, homodimer. NH4(+) is required as a cofactor. K(+) serves as cofactor.

It localises to the cytoplasm. The enzyme catalyses (R)-pantothenate + ATP = (R)-4'-phosphopantothenate + ADP + H(+). The protein operates within cofactor biosynthesis; coenzyme A biosynthesis; CoA from (R)-pantothenate: step 1/5. Catalyzes the phosphorylation of pantothenate (Pan), the first step in CoA biosynthesis. The chain is Type III pantothenate kinase from Methylibium petroleiphilum (strain ATCC BAA-1232 / LMG 22953 / PM1).